Here is a 375-residue protein sequence, read N- to C-terminus: MSQPKKRKLESGGGGEGGEGTEEEDGAEREAALERPRRTKRERDQLYYECYSDVSVHEEMIADRVRTDAYRLGILRNWAALRGKTVLDVGAGTGILSIFCAQAGARRVYAVEASAIWQQAREVVRFNGLEDRVHVLPGPVETVELPEQVDAIVSEWMGYGLLHESMLSSVLHARTKWLKEGGLLLPASAELFIAPISDQMLEWRLGFWSQVKQHYGVDMSCLEGFATRCLMGHSEIVVQGLSGEDVLARPQRFAQLELSRAGLEQELEAGVGGRFRCSCYGSAPMHGFAIWFQVTFPGGESEKPLVLSTSPFHPATHWKQALLYLNEPVQVEQDTDVSGEITLLPSRDNPRRLRVLLRYKVGDQEEKTKDFAMED.

The segment at 1 to 38 (MSQPKKRKLESGGGGEGGEGTEEEDGAEREAALERPRR) is disordered. At Thr-21 the chain carries Phosphothreonine. Residues 28-38 (EREAALERPRR) are compositionally biased toward basic and acidic residues. 3 positions are modified to asymmetric dimethylarginine; by autocatalysis: Arg-29, Arg-35, and Arg-37. One can recognise an SAM-dependent MTase PRMT-type domain in the interval 44 to 374 (DQLYYECYSD…EEKTKDFAME (331 aa)). 5 residues coordinate S-adenosyl-L-methionine: His-57, Arg-66, Gly-90, Glu-112, and Glu-141. Active-site residues include Glu-155 and Glu-164.

It belongs to the class I-like SAM-binding methyltransferase superfamily. Protein arginine N-methyltransferase family. PRMT6 subfamily. Interacts with EPB41L3 and NCOA1. As to quaternary structure, (Microbial infection) Interacts with (and methylates) HIV-1 Tat, Rev and Nucleocapsid protein p7 (NC). In terms of assembly, (Microbial infection) Interacts with human cytomegalovirus protein UL69. In terms of processing, automethylation enhances its stability and antiretroviral activity. In terms of tissue distribution, highly expressed in kidney and testis.

Its subcellular location is the nucleus. It catalyses the reaction L-arginyl-[protein] + 2 S-adenosyl-L-methionine = N(omega),N(omega)-dimethyl-L-arginyl-[protein] + 2 S-adenosyl-L-homocysteine + 2 H(+). Its function is as follows. Arginine methyltransferase that can catalyze the formation of both omega-N monomethylarginine (MMA) and asymmetrical dimethylarginine (aDMA), with a strong preference for the formation of aDMA. Preferentially methylates arginyl residues present in a glycine and arginine-rich domain and displays preference for monomethylated substrates. Specifically mediates the asymmetric dimethylation of histone H3 'Arg-2' to form H3R2me2a. H3R2me2a represents a specific tag for epigenetic transcriptional repression and is mutually exclusive with methylation on histone H3 'Lys-4' (H3K4me2 and H3K4me3). Acts as a transcriptional repressor of various genes such as HOXA2, THBS1 and TP53. Repression of TP53 blocks cellular senescence. Also methylates histone H2A and H4 'Arg-3' (H2AR3me and H4R3me, respectively). Acts as a regulator of DNA base excision during DNA repair by mediating the methylation of DNA polymerase beta (POLB), leading to the stimulation of its polymerase activity by enhancing DNA binding and processivity. Methylates HMGA1. Regulates alternative splicing events. Acts as a transcriptional coactivator of a number of steroid hormone receptors including ESR1, ESR2, PGR and NR3C1. Promotes fasting-induced transcriptional activation of the gluconeogenic program through methylation of the CRTC2 transcription coactivator. May play a role in innate immunity against HIV-1 in case of infection by methylating and impairing the function of various HIV-1 proteins such as Tat, Rev and Nucleocapsid protein p7 (NC). Methylates GPS2, protecting GPS2 from ubiquitination and degradation. Methylates SIRT7, inhibiting SIRT7 histone deacetylase activity and promoting mitochondria biogenesis. The polypeptide is Protein arginine N-methyltransferase 6 (PRMT6) (Homo sapiens (Human)).